The following is a 324-amino-acid chain: ATP synthase mitochondrial F1 complex assembly factor 1 (324 aa).

The transit peptide at 1 to 54 (MAAVVSAAGGACPAVLQVAGLYRGLCAVRSRALGLGFVSPAQLRVFPVRRGSGL) directs the protein to the mitochondrion.

The protein belongs to the ATP11 family. Interacts with ATP5F1B; involved in the assembly of the F1 component of the mitochondrial ATP synthase (ATPase). Widely expressed but with low level.

Its subcellular location is the mitochondrion inner membrane. Has a complex stabilizing activity in the assembly of the mitochondrial F1-F0 complex. The polypeptide is ATP synthase mitochondrial F1 complex assembly factor 1 (Mus musculus (Mouse)).